The primary structure comprises 304 residues: UDP-N-acetylenolpyruvoylglucosamine reductase (304 aa).

Positions 33–198 constitute an FAD-binding PCMH-type domain; it reads KVGGPVDILL…LEVTFNLEKG (166 aa). Residue R177 is part of the active site. The Proton donor role is filled by S227. The active site involves E297.

The protein belongs to the MurB family. FAD serves as cofactor.

The protein resides in the cytoplasm. The catalysed reaction is UDP-N-acetyl-alpha-D-muramate + NADP(+) = UDP-N-acetyl-3-O-(1-carboxyvinyl)-alpha-D-glucosamine + NADPH + H(+). Its pathway is cell wall biogenesis; peptidoglycan biosynthesis. Its function is as follows. Cell wall formation. The protein is UDP-N-acetylenolpyruvoylglucosamine reductase of Clostridium kluyveri (strain NBRC 12016).